A 304-amino-acid chain; its full sequence is MHLQFLGTGAGTPSRERNVTSIALDLHGVRNATWLFDCGEGTQHQILRTPIKPGRIEKIFITHLHGDHLFGLPGLLTSRSMNGCVEPMTLYGPAGIKTFVETSLSLSGSWLTFPLEIIEISAGEVFQDAHFRVTAYPLTHPVECYGYRIDELDKPGALDAQKLAAHGVPAGPHFYQLKQGRSVTLDDGRVINGWDYVGSKIKGRSLAIFGDTSPTAAASELAAGVDIMVHEATLEVAMEEKANGRGHSSTVQAARVAQQSGAKKLIITHLSSRYLHHDCERLLAECRAVFPHTEMAHDFALFPC.

7 residues coordinate Zn(2+): His-63, His-65, Asp-67, His-68, His-140, Asp-211, and His-269. Asp-67 functions as the Proton acceptor in the catalytic mechanism.

This sequence belongs to the RNase Z family. RNase BN subfamily. In terms of assembly, homodimer. The cofactor is Zn(2+).

Its function is as follows. Zinc phosphodiesterase, which has both exoribonuclease and endoribonuclease activities. The protein is Ribonuclease BN of Erwinia tasmaniensis (strain DSM 17950 / CFBP 7177 / CIP 109463 / NCPPB 4357 / Et1/99).